A 624-amino-acid polypeptide reads, in one-letter code: Kelch-like protein diablo (624 aa).

The interval 1-55 (MGDPLLPGSTGLGSGSATAATGGSVTAGSGLGNGGTGGAERPPSPARLTHTSEKH) is disordered. The segment covering 15-28 (GSATAATGGSVTAG) has biased composition (low complexity). Residues 29–38 (SGLGNGGTGG) are compositionally biased toward gly residues. Residues 73-140 (CDVVLNVGGR…CYTAHIIVEE (68 aa)) enclose the BTB domain. Residues 175–277 (CLGIRAFADT…SPKFLVGTVG (103 aa)) enclose the BACK domain. Kelch repeat units follow at residues 324–370 (VLFA…VLND), 372–418 (LYAV…VLDG), 419–465 (FLYA…VLSG), 467–512 (LYAI…VFNN), 514–559 (IYAV…VVNG), and 560–606 (QLYA…VMRA).

It participates in protein modification; protein ubiquitination. Functionally, probable substrate-specific adapter of an E3 ubiquitin-protein ligase complex which mediates the ubiquitination and subsequent proteasomal degradation of target proteins. May have a role in synapse differentiation and growth. The chain is Kelch-like protein diablo from Drosophila grimshawi (Hawaiian fruit fly).